Here is a 352-residue protein sequence, read N- to C-terminus: Selenide, water dikinase (352 aa).

Residue C23 is part of the active site. ATP-binding positions include K26 and 54–56; that span reads SRD. D57 provides a ligand contact to Mg(2+). ATP-binding positions include D74, D97, and 145-147; that span reads GHS. D97 contacts Mg(2+). Residue D233 participates in Mg(2+) binding.

Belongs to the selenophosphate synthase 1 family. Class I subfamily. Homodimer. The cofactor is Mg(2+).

The enzyme catalyses hydrogenselenide + ATP + H2O = selenophosphate + AMP + phosphate + 2 H(+). Functionally, synthesizes selenophosphate from selenide and ATP. This chain is Selenide, water dikinase, found in Shewanella baltica (strain OS185).